A 145-amino-acid chain; its full sequence is Putative pre-16S rRNA nuclease (145 aa).

The protein belongs to the YqgF nuclease family.

Its subcellular location is the cytoplasm. Its function is as follows. Could be a nuclease involved in processing of the 5'-end of pre-16S rRNA. This chain is Putative pre-16S rRNA nuclease, found in Tropheryma whipplei (strain Twist) (Whipple's bacillus).